Here is a 343-residue protein sequence, read N- to C-terminus: uncharacterized protein (343 aa).

The disordered stretch occupies residues 66–89 (TQNPEPTSASTPPSASASSLPNGA). Low complexity predominate over residues 71–84 (PTSASTPPSASASS). The chain crosses the membrane as a helical span at residues 96–116 (GVIAGPIVGVLGGLIVLVIIF). Disordered regions lie at residues 161 to 191 (GGYQMHSTPWASSPRNSTIPQRSQSFYNDTR) and 252 to 343 (GRPL…SEHF). A compositionally biased stretch (polar residues) spans 165-188 (MHSTPWASSPRNSTIPQRSQSFYN). The span at 280–289 (SNDDSDETKL) shows a compositional bias: basic and acidic residues. Low complexity predominate over residues 290 to 299 (KQSSTESSSE). Composition is skewed to basic and acidic residues over residues 301–311 (LDEKDKFDKNS) and 322–333 (SSYEHEISEEHK). The segment covering 334-343 (KHSKKRSEHF) has biased composition (basic residues).

The protein resides in the golgi apparatus membrane. This is an uncharacterized protein from Schizosaccharomyces pombe (strain 972 / ATCC 24843) (Fission yeast).